Here is a 216-residue protein sequence, read N- to C-terminus: 3-isopropylmalate dehydratase small subunit (216 aa).

It belongs to the LeuD family. LeuD type 1 subfamily. As to quaternary structure, heterodimer of LeuC and LeuD.

The enzyme catalyses (2R,3S)-3-isopropylmalate = (2S)-2-isopropylmalate. The protein operates within amino-acid biosynthesis; L-leucine biosynthesis; L-leucine from 3-methyl-2-oxobutanoate: step 2/4. Its function is as follows. Catalyzes the isomerization between 2-isopropylmalate and 3-isopropylmalate, via the formation of 2-isopropylmaleate. The chain is 3-isopropylmalate dehydratase small subunit from Burkholderia thailandensis (strain ATCC 700388 / DSM 13276 / CCUG 48851 / CIP 106301 / E264).